Here is a 494-residue protein sequence, read N- to C-terminus: Guanosine-5'-triphosphate,3'-diphosphate pyrophosphatase (494 aa).

This sequence belongs to the GppA/Ppx family. GppA subfamily.

It carries out the reaction guanosine 3'-diphosphate 5'-triphosphate + H2O = guanosine 3',5'-bis(diphosphate) + phosphate + H(+). It functions in the pathway purine metabolism; ppGpp biosynthesis; ppGpp from GTP: step 2/2. In terms of biological role, catalyzes the conversion of pppGpp to ppGpp. Guanosine pentaphosphate (pppGpp) is a cytoplasmic signaling molecule which together with ppGpp controls the 'stringent response', an adaptive process that allows bacteria to respond to amino acid starvation, resulting in the coordinated regulation of numerous cellular activities. In Shigella flexneri, this protein is Guanosine-5'-triphosphate,3'-diphosphate pyrophosphatase.